A 312-amino-acid polypeptide reads, in one-letter code: Olfactory receptor 2C1 (312 aa).

At 1 to 24 (MEVDSNSSSGSFILMGVSDHPHLE) the chain is on the extracellular side. N-linked (GlcNAc...) asparagine glycosylation is present at N6. A helical membrane pass occupies residues 25-48 (IIFFAVILASYLLTLVGNLTIILL). Topologically, residues 49–57 (SRLDARLHT) are cytoplasmic. A helical transmembrane segment spans residues 58-79 (PMYFFLSNLSSLDLAFTTSSVP). At 80 to 100 (QMLKNLWGPDKTISYGGCVTQ) the chain is on the extracellular side. Cysteines 97 and 189 form a disulfide. Residues 101–120 (LYVFLWLGATECILLVVMAF) traverse the membrane as a helical segment. The Cytoplasmic portion of the chain corresponds to 121-139 (DRYVAVCRPLHYMTVMNPR). The helical transmembrane segment at 140–160 (LCWGLAAISWLGGLGNSVIQS) threads the bilayer. Residues 161-200 (TFTLQLPFCGHRKVDNFLCEVPAMIKLACGDTSLNEAVLN) lie on the Extracellular side of the membrane. Residues 201 to 222 (GVCTFFTVVPVSVILVSYCFIA) traverse the membrane as a helical segment. The Cytoplasmic segment spans residues 223–236 (QAVMKIRSVEGRRK). A helical membrane pass occupies residues 237–261 (AFNTCVSHLVVVFLFYGSAIYGYLL). Residues 262-272 (PAKSSNQSQGK) lie on the Extracellular side of the membrane. The helical transmembrane segment at 273–292 (FISLFYSVVTPMVNPLIYTL) threads the bilayer. The Cytoplasmic segment spans residues 293–312 (RNKEVKGALGRLLGKGRGAS).

It belongs to the G-protein coupled receptor 1 family. In terms of tissue distribution, olfactory epithelium. Present in various subcellular compartments of the olfactory sensory neurons, particularly in the axonal processes and neve terminals.

The protein resides in the cell membrane. Its function is as follows. Olfactory receptor that is activated by the binding of organosulfur odorants with thioether groups such as (methylthio)methanetiol (MTMT). Also binds odorants acetophenone and benzaldehyde. The activity of this receptor is mediated by G proteins which activate adenylyl cyclase. May be involved in the molecular processes underlying fasciculation and targeting of olfactory axons. This Mus musculus (Mouse) protein is Olfactory receptor 2C1.